Reading from the N-terminus, the 153-residue chain is Transcriptional repressor NrdR (153 aa).

The segment at 3 to 34 (CPFCNNISTNVKDSRSIEDDMLIRRRRVCPVC) is a zinc-finger region. One can recognise an ATP-cone domain in the interval 49–139 (LMVIKKNGGL…VYMNFKNIND (91 aa)).

The protein belongs to the NrdR family. Zn(2+) is required as a cofactor.

In terms of biological role, negatively regulates transcription of bacterial ribonucleotide reductase nrd genes and operons by binding to NrdR-boxes. This chain is Transcriptional repressor NrdR, found in Ehrlichia ruminantium (strain Gardel).